The chain runs to 660 residues: MKAVIFAYHDMGCQGVQAVLDAGYEIAAIFTHADNPAENTFFGSVSRLAAGLGIPVYAPDNVNHPIWVDRIAELAPDIIFSFYYRNLLSEEILHLAPAGAFNLHGSLLPAYRGRAPLNWVLVNGESETGVTLHRMVKRADAGEIVASQRVAIAQDDVALTLHHKLCQAARQLLNSILPTMKCGDIPSVPQRESDATYYGRRRPEDGLIDWHKPVSTVHNLVRAVAAPWPGAFSYNGSQKFTIWSSRICPDAQGVLPGSVISVSPLRVACADGALEIITGQAGDGITVQGSQLAQTLGLVAGARLNRPPATSGKRRIRVLILGVNGFIGNHLTERLLNEENYEVYGMDIGSNAISRFLLHPRFHFVEGDISIHSEWIEYHVKKCDVVLPLVAIATPIEYTRNPLRVFELDFEENLRIIRYCVKYRKRVVFPSTSEVYGMCTDASFDEDKSNLIVGPVNKPRWIYSVSKQLLDRVIWAYGEKEGLRFTLFRPFNWMGPRLDSLSAARIGSSRAITQLILNLVEGTPIKLIDGGQQKRCFTDIRDGIEALFRIIVNEGDRCDGKIINIGNPDNEASIQELATLLLDSFDKHPLRCHFPPFAGFQVVASRSYYGKGYQDVAHRKPSIDNARRCLGWEPSIAMRDTVEETLDFFLRSVDVAERAS.

Residues 1-304 (MKAVIFAYHD…TLGLVAGARL (304 aa)) form a formyltransferase ArnAFT region. Residue histidine 104 is the Proton donor; for formyltransferase activity of the active site. (6R)-10-formyltetrahydrofolate-binding positions include arginine 114 and 136-140 (VKRAD). Residues 314-660 (RRIRVLILGV…RSVDVAERAS (347 aa)) are dehydrogenase ArnADH. NAD(+) contacts are provided by residues aspartate 347 and 368–369 (DI). Residues alanine 393, tyrosine 398, and 432-433 (TS) each bind UDP-alpha-D-glucuronate. The active-site Proton acceptor; for decarboxylase activity is the glutamate 434. Residues arginine 460, asparagine 492, 526–535 (KLIDGGQQKR), and tyrosine 613 contribute to the UDP-alpha-D-glucuronate site. Arginine 619 serves as the catalytic Proton donor; for decarboxylase activity.

In the N-terminal section; belongs to the Fmt family. UDP-L-Ara4N formyltransferase subfamily. It in the C-terminal section; belongs to the NAD(P)-dependent epimerase/dehydratase family. UDP-glucuronic acid decarboxylase subfamily. As to quaternary structure, homohexamer, formed by a dimer of trimers.

The enzyme catalyses UDP-alpha-D-glucuronate + NAD(+) = UDP-beta-L-threo-pentopyranos-4-ulose + CO2 + NADH. The catalysed reaction is UDP-4-amino-4-deoxy-beta-L-arabinose + (6R)-10-formyltetrahydrofolate = UDP-4-deoxy-4-formamido-beta-L-arabinose + (6S)-5,6,7,8-tetrahydrofolate + H(+). It functions in the pathway nucleotide-sugar biosynthesis; UDP-4-deoxy-4-formamido-beta-L-arabinose biosynthesis; UDP-4-deoxy-4-formamido-beta-L-arabinose from UDP-alpha-D-glucuronate: step 1/3. The protein operates within nucleotide-sugar biosynthesis; UDP-4-deoxy-4-formamido-beta-L-arabinose biosynthesis; UDP-4-deoxy-4-formamido-beta-L-arabinose from UDP-alpha-D-glucuronate: step 3/3. Its pathway is bacterial outer membrane biogenesis; lipopolysaccharide biosynthesis. Bifunctional enzyme that catalyzes the oxidative decarboxylation of UDP-glucuronic acid (UDP-GlcUA) to UDP-4-keto-arabinose (UDP-Ara4O) and the addition of a formyl group to UDP-4-amino-4-deoxy-L-arabinose (UDP-L-Ara4N) to form UDP-L-4-formamido-arabinose (UDP-L-Ara4FN). The modified arabinose is attached to lipid A and is required for resistance to polymyxin and cationic antimicrobial peptides. The chain is Bifunctional polymyxin resistance protein ArnA from Salmonella choleraesuis (strain SC-B67).